The primary structure comprises 172 residues: RTX-I toxin-activating lysine-acyltransferase ApxIC (172 aa).

Active-site residues include H24 and D93.

This sequence belongs to the RTX toxin acyltransferase family. In terms of assembly, homodimer.

Its subcellular location is the cytoplasm. It catalyses the reaction a fatty acyl-[ACP] + L-lysyl-[protein] = N(6)-(fatty acyl)-L-lysyl-[protein] + holo-[ACP] + H(+). Its function is as follows. Protein-lysine acyltransferase that catalyzes fatty acylation of the protoxin, thereby converting it to the active toxin. The chain is RTX-I toxin-activating lysine-acyltransferase ApxIC from Actinobacillus pleuropneumoniae (Haemophilus pleuropneumoniae).